Consider the following 174-residue polypeptide: Adenylate kinase (174 aa).

Positions 12-41 (STGDMLRAAIKAGTLLGLEAKKIIDEGGLV) are NMP. AMP contacts are provided by residues Thr13, Arg18, 39–41 (GLV), 67–70 (GFPR), and Gln74. An LID region spans residues 104–141 (GRRVHLASGRTYHVTYNPPKVEGKDDVTGEDLIQRDDD). Residues Arg105 and 114-115 (TY) each bind ATP. Residues Arg138 and Arg149 each contribute to the AMP site.

This sequence belongs to the adenylate kinase family. As to quaternary structure, monomer.

Its subcellular location is the cytoplasm. The enzyme catalyses AMP + ATP = 2 ADP. Its pathway is purine metabolism; AMP biosynthesis via salvage pathway; AMP from ADP: step 1/1. Its function is as follows. Catalyzes the reversible transfer of the terminal phosphate group between ATP and AMP. Plays an important role in cellular energy homeostasis and in adenine nucleotide metabolism. This is Adenylate kinase from Neisseria polysaccharea.